Here is a 230-residue protein sequence, read N- to C-terminus: Acyl-protein thioesterase 1 (230 aa).

Active-site charge relay system residues include S119, D174, and H208. K224 is modified (N6-acetyllysine).

Belongs to the AB hydrolase superfamily. AB hydrolase 2 family. As to quaternary structure, homodimer. As to expression, ubiquitous. Detected at low levels in all tissues tested.

It localises to the cytoplasm. It is found in the cell membrane. The protein localises to the nucleus membrane. The protein resides in the endoplasmic reticulum. It catalyses the reaction S-hexadecanoyl-L-cysteinyl-[protein] + H2O = L-cysteinyl-[protein] + hexadecanoate + H(+). The catalysed reaction is 1-hexadecanoyl-sn-glycero-3-phosphocholine + H2O = sn-glycerol 3-phosphocholine + hexadecanoate + H(+). It carries out the reaction a 1-(9Z-octadecenoyl)-2-acyl-sn-glycero-3-phosphocholine + H2O = a 2-acyl-sn-glycero-3-phosphocholine + (9Z)-octadecenoate + H(+). In terms of biological role, acts as an acyl-protein thioesterase. Hydrolyzes fatty acids from S-acylated cysteine residues in proteins such as trimeric G alpha proteins or HRAS. Acts as a palmitoyl thioesterase that catalyzes depalmitoylation of proteins, such as ADRB2, KCNMA1 and SQSTM1. Acts as a negative regulator of autophagy by mediating palmitoylation of SQSTM1, decreasing affinity between SQSTM1 and ATG8 proteins and recruitment of ubiquitinated cargo proteins to autophagosomes. Acts as a lysophospholipase and hydrolyzes lysophosphatidylcholine (lyso-PC). Also hydrolyzes lysophosphatidylethanolamine (lyso-PE), lysophosphatidylinositol (lyso-PI) and lysophosphatidylserine (lyso-PS). Has much higher thioesterase activity than lysophospholipase activity. Contributes to the production of lysophosphatidic acid (LPA) during blood coagulation by recognizing and cleaving plasma phospholipids to generate lysophospholipids which in turn act as substrates for ENPP2 to produce LPA. This Rattus norvegicus (Rat) protein is Acyl-protein thioesterase 1 (Lypla1).